A 408-amino-acid polypeptide reads, in one-letter code: 1-deoxy-D-xylulose 5-phosphate reductoisomerase (408 aa).

Positions 26, 27, 28, 29, and 143 each coordinate NADPH. Lysine 144 lines the 1-deoxy-D-xylulose 5-phosphate pocket. Residue glutamate 145 coordinates NADPH. Residue aspartate 167 coordinates Mn(2+). Serine 168, glutamate 169, serine 193, and histidine 216 together coordinate 1-deoxy-D-xylulose 5-phosphate. Glutamate 169 serves as a coordination point for Mn(2+). An NADPH-binding site is contributed by glycine 222. Residues serine 229, asparagine 234, lysine 235, and glutamate 238 each coordinate 1-deoxy-D-xylulose 5-phosphate. Glutamate 238 provides a ligand contact to Mn(2+).

It belongs to the DXR family. Requires Mg(2+) as cofactor. The cofactor is Mn(2+).

The enzyme catalyses 2-C-methyl-D-erythritol 4-phosphate + NADP(+) = 1-deoxy-D-xylulose 5-phosphate + NADPH + H(+). It participates in isoprenoid biosynthesis; isopentenyl diphosphate biosynthesis via DXP pathway; isopentenyl diphosphate from 1-deoxy-D-xylulose 5-phosphate: step 1/6. In terms of biological role, catalyzes the NADPH-dependent rearrangement and reduction of 1-deoxy-D-xylulose-5-phosphate (DXP) to 2-C-methyl-D-erythritol 4-phosphate (MEP). The polypeptide is 1-deoxy-D-xylulose 5-phosphate reductoisomerase (Corynebacterium jeikeium (strain K411)).